The primary structure comprises 323 residues: MEKQVQMPEVELNSDHKMPLVGFGTCIPDPIPPLEELATIFLEVIKVGYRHFDTASCYGTEEALGKAVAQAIESGLVNGREEFFITSKLWVEDADQDLILPALKKTLGNLGLDYLDLYLIHMPLRLRQGAEMFKYTKEDFLPFDIKGTWKAMEECSKLGLCKSIGVSNYSCEKLSKLLENATILPAVNQVEMNVVWKQSKLLPFCKEKNIHVSAWSPLLSYGSIWSQNAVMENTVLVDIAASKSKTVAQVALRWIYEQGASFIMRTFNKERMYQNVQIFDWELTQEELDQIQQIPQRRSNLAEAFVHPEGPIKSVEELWDGDL.

Residue aspartate 53 coordinates NADP(+). The active-site Proton donor is tyrosine 58. NADP(+) is bound by residues 167-168 (SN), glutamine 189, 215-220 (WSPLLS), and 289-297 (DQIQQIPQR).

The protein belongs to the aldo/keto reductase family. As to quaternary structure, monomer.

The catalysed reaction is rhazimol + NADP(+) = rhazimal + NADPH + 2 H(+). The protein operates within alkaloid biosynthesis. Functionally, oxidoreductase involved in the biosynthesis of akuammilan monoterpene indole alkaloids (MIAs) natural products, components with various biological properties such as antidiabetic, antibacterial, anti-inflammatory, anticancer, and antimalarial activities. Catalyzes the conversion of rhazimal to rhazimol. This chain is Rhazimal reductase 2, found in Alstonia scholaris (Dogbane).